Reading from the N-terminus, the 294-residue chain is 33 kDa chaperonin (294 aa).

Disulfide bonds link C239-C241 and C272-C275.

It belongs to the HSP33 family. Under oxidizing conditions two disulfide bonds are formed involving the reactive cysteines. Under reducing conditions zinc is bound to the reactive cysteines and the protein is inactive.

The protein resides in the cytoplasm. Functionally, redox regulated molecular chaperone. Protects both thermally unfolding and oxidatively damaged proteins from irreversible aggregation. Plays an important role in the bacterial defense system toward oxidative stress. This chain is 33 kDa chaperonin, found in Listeria monocytogenes serotype 4b (strain CLIP80459).